The sequence spans 339 residues: Ketol-acid reductoisomerase (NADP(+)) (339 aa).

A KARI N-terminal Rossmann domain is found at 1 to 182 (MKVYYDADCD…GGGRSGIIET (182 aa)). NADP(+)-binding positions include 24-27 (YGSQ), Arg-48, Ser-51, Ser-53, and 83-86 (DEHQ). His-108 is an active-site residue. Gly-134 contacts NADP(+). The region spanning 183–328 (NFREECETDL…AKLRAMMPWI (146 aa)) is the KARI C-terminal knotted domain. Mg(2+)-binding residues include Asp-191, Glu-195, Glu-227, and Glu-231. Ser-252 provides a ligand contact to substrate.

Belongs to the ketol-acid reductoisomerase family. The cofactor is Mg(2+).

The enzyme catalyses (2R)-2,3-dihydroxy-3-methylbutanoate + NADP(+) = (2S)-2-acetolactate + NADPH + H(+). It catalyses the reaction (2R,3R)-2,3-dihydroxy-3-methylpentanoate + NADP(+) = (S)-2-ethyl-2-hydroxy-3-oxobutanoate + NADPH + H(+). It functions in the pathway amino-acid biosynthesis; L-isoleucine biosynthesis; L-isoleucine from 2-oxobutanoate: step 2/4. It participates in amino-acid biosynthesis; L-valine biosynthesis; L-valine from pyruvate: step 2/4. Its function is as follows. Involved in the biosynthesis of branched-chain amino acids (BCAA). Catalyzes an alkyl-migration followed by a ketol-acid reduction of (S)-2-acetolactate (S2AL) to yield (R)-2,3-dihydroxy-isovalerate. In the isomerase reaction, S2AL is rearranged via a Mg-dependent methyl migration to produce 3-hydroxy-3-methyl-2-ketobutyrate (HMKB). In the reductase reaction, this 2-ketoacid undergoes a metal-dependent reduction by NADPH to yield (R)-2,3-dihydroxy-isovalerate. The sequence is that of Ketol-acid reductoisomerase (NADP(+)) from Novosphingobium aromaticivorans (strain ATCC 700278 / DSM 12444 / CCUG 56034 / CIP 105152 / NBRC 16084 / F199).